We begin with the raw amino-acid sequence, 404 residues long: Phosphopentomutase (404 aa).

Mn(2+) contacts are provided by Asp-10, Asp-303, His-308, Asp-344, His-345, and His-356.

The protein belongs to the phosphopentomutase family. Requires Mn(2+) as cofactor.

Its subcellular location is the cytoplasm. The catalysed reaction is 2-deoxy-alpha-D-ribose 1-phosphate = 2-deoxy-D-ribose 5-phosphate. It carries out the reaction alpha-D-ribose 1-phosphate = D-ribose 5-phosphate. Its pathway is carbohydrate degradation; 2-deoxy-D-ribose 1-phosphate degradation; D-glyceraldehyde 3-phosphate and acetaldehyde from 2-deoxy-alpha-D-ribose 1-phosphate: step 1/2. Isomerase that catalyzes the conversion of deoxy-ribose 1-phosphate (dRib-1-P) and ribose 1-phosphate (Rib-1-P) to deoxy-ribose 5-phosphate (dRib-5-P) and ribose 5-phosphate (Rib-5-P), respectively. The polypeptide is Phosphopentomutase (Shewanella oneidensis (strain ATCC 700550 / JCM 31522 / CIP 106686 / LMG 19005 / NCIMB 14063 / MR-1)).